Reading from the N-terminus, the 146-residue chain is Large ribosomal subunit protein bL9 (146 aa).

Belongs to the bacterial ribosomal protein bL9 family. Part of the 50S ribosomal subunit. Contacts protein L31.

Functionally, binds to the 23S rRNA and protein L31. This Deinococcus radiodurans (strain ATCC 13939 / DSM 20539 / JCM 16871 / CCUG 27074 / LMG 4051 / NBRC 15346 / NCIMB 9279 / VKM B-1422 / R1) protein is Large ribosomal subunit protein bL9 (rplI).